The primary structure comprises 249 residues: Ciliogenesis and planar polarity effector 2 (249 aa).

Residues 46–249 (PADVAAYKVF…VIAGLVGGAE (204 aa)) are small GTPase-like. Residues 58–65 (GKSGVGKT) and 171–174 (TKLD) contribute to the GTP site.

Belongs to the small GTPase superfamily. Rab family. Interacts with fuz.

The protein localises to the cytoplasm. It localises to the cytoskeleton. It is found in the cilium basal body. In terms of biological role, potential effector of the planar cell polarity signaling pathway. Plays a role in targeted membrane trafficking most probably at the level of vesicle fusion with membranes. Involved in cilium biogenesis by regulating the transport of cargo proteins to the basal body and to the apical tips of cilia. More generally involved in exocytosis in secretory cells. In Xenopus laevis (African clawed frog), this protein is Ciliogenesis and planar polarity effector 2.